A 355-amino-acid chain; its full sequence is Protein RecA (355 aa).

67-74 (GPESSGKT) provides a ligand contact to ATP.

Belongs to the RecA family.

It is found in the cytoplasm. Can catalyze the hydrolysis of ATP in the presence of single-stranded DNA, the ATP-dependent uptake of single-stranded DNA by duplex DNA, and the ATP-dependent hybridization of homologous single-stranded DNAs. It interacts with LexA causing its activation and leading to its autocatalytic cleavage. This chain is Protein RecA, found in Histophilus somni (strain 2336) (Haemophilus somnus).